The following is a 963-amino-acid chain: Bifunctional glutamine synthetase adenylyltransferase/adenylyl-removing enzyme (963 aa).

Residues 1 to 451 are adenylyl removase; that stretch reads MAAPSELQLY…EHFADIIAER (451 aa). The interval 461-963 is adenylyl transferase; the sequence is TIEWKALWAG…VAFWEKVFAE (503 aa).

This sequence belongs to the GlnE family. Mg(2+) is required as a cofactor.

The enzyme catalyses [glutamine synthetase]-O(4)-(5'-adenylyl)-L-tyrosine + phosphate = [glutamine synthetase]-L-tyrosine + ADP. The catalysed reaction is [glutamine synthetase]-L-tyrosine + ATP = [glutamine synthetase]-O(4)-(5'-adenylyl)-L-tyrosine + diphosphate. Involved in the regulation of glutamine synthetase GlnA, a key enzyme in the process to assimilate ammonia. When cellular nitrogen levels are high, the C-terminal adenylyl transferase (AT) inactivates GlnA by covalent transfer of an adenylyl group from ATP to specific tyrosine residue of GlnA, thus reducing its activity. Conversely, when nitrogen levels are low, the N-terminal adenylyl removase (AR) activates GlnA by removing the adenylyl group by phosphorolysis, increasing its activity. The regulatory region of GlnE binds the signal transduction protein PII (GlnB) which indicates the nitrogen status of the cell. In Hahella chejuensis (strain KCTC 2396), this protein is Bifunctional glutamine synthetase adenylyltransferase/adenylyl-removing enzyme.